The primary structure comprises 121 residues: Small ribosomal subunit protein uS13 (121 aa).

Positions 95-121 (GLPVRGQKTKTNARTRKGKRKTVGAKS) are disordered.

It belongs to the universal ribosomal protein uS13 family. In terms of assembly, part of the 30S ribosomal subunit. Forms a loose heterodimer with protein S19. Forms two bridges to the 50S subunit in the 70S ribosome.

Its function is as follows. Located at the top of the head of the 30S subunit, it contacts several helices of the 16S rRNA. In the 70S ribosome it contacts the 23S rRNA (bridge B1a) and protein L5 of the 50S subunit (bridge B1b), connecting the 2 subunits; these bridges are implicated in subunit movement. Contacts the tRNAs in the A and P-sites. The sequence is that of Small ribosomal subunit protein uS13 from Campylobacter jejuni subsp. jejuni serotype O:6 (strain 81116 / NCTC 11828).